Consider the following 138-residue polypeptide: Superoxide dismutase [Mn] (138 aa).

Residues H1, H49, D133, and H137 each contribute to the Mn(2+) site.

This sequence belongs to the iron/manganese superoxide dismutase family. Mn(2+) is required as a cofactor.

The enzyme catalyses 2 superoxide + 2 H(+) = H2O2 + O2. Its function is as follows. Destroys superoxide anion radicals which are normally produced within the cells and which are toxic to biological systems. This chain is Superoxide dismutase [Mn] (sodA), found in Mycobacterium celatum.